The chain runs to 261 residues: Phosphoinositide-3-kinase-interacting protein 1 (261 aa).

A signal peptide spans 1–21 (MLLAWVRTILVSNMLLAEAYG). Residues 22-166 (SGGCFWDNGH…NSKEKKDLGT (145 aa)) are Extracellular-facing. One can recognise a Kringle domain in the interval 24 to 101 (GCFWDNGHLY…EKRPCQDLRC (78 aa)). 3 disulfide bridges follow: C25–C101, C46–C82, and C70–C96. Over residues 90–101 (APEKRPCQDLRC) the composition is skewed to basic and acidic residues. The interval 90 to 122 (APEKRPCQDLRCPDTTSQGLPTSATETEEAAEV) is disordered. Residues 167–187 (LGYVLGITMMVIIVVIGAGIV) traverse the membrane as a helical segment. Over 188–261 (LGYTYKRGKD…LMGQAGTPGA (74 aa)) the chain is Cytoplasmic.

The protein resides in the cell membrane. Negative regulator of hepatic phosphatidylinositol 3-kinase (PI3K) activity. The polypeptide is Phosphoinositide-3-kinase-interacting protein 1 (PIK3IP1) (Bos taurus (Bovine)).